Consider the following 328-residue polypeptide: Ornithine carbamoyltransferase, catabolic (328 aa).

Carbamoyl phosphate contacts are provided by residues 56–59 (STRT), Gln-83, Arg-107, and 134–137 (HPTQ). L-ornithine is bound by residues Asn-166, Asp-230, and 234-235 (SM). Residues 270–271 (CL) and Arg-315 each bind carbamoyl phosphate.

This sequence belongs to the aspartate/ornithine carbamoyltransferase superfamily. OTCase family.

The protein localises to the cytoplasm. The enzyme catalyses carbamoyl phosphate + L-ornithine = L-citrulline + phosphate + H(+). Its pathway is amino-acid degradation; L-arginine degradation via ADI pathway; carbamoyl phosphate from L-arginine: step 2/2. Reversibly catalyzes the transfer of the carbamoyl group from carbamoyl phosphate (CP) to the N(epsilon) atom of ornithine (ORN) to produce L-citrulline. The protein is Ornithine carbamoyltransferase, catabolic (arcB) of Borreliella afzelii (Borrelia afzelii).